We begin with the raw amino-acid sequence, 145 residues long: 3-dehydroquinate dehydratase (145 aa).

Tyr-24 functions as the Proton acceptor in the catalytic mechanism. Residues Asn-75, His-81, and Asp-88 each contribute to the substrate site. Residue His-101 is the Proton donor of the active site. Substrate contacts are provided by residues Ile-102–Ser-103 and Arg-112.

It belongs to the type-II 3-dehydroquinase family. In terms of assembly, homododecamer.

The catalysed reaction is 3-dehydroquinate = 3-dehydroshikimate + H2O. Its pathway is metabolic intermediate biosynthesis; chorismate biosynthesis; chorismate from D-erythrose 4-phosphate and phosphoenolpyruvate: step 3/7. In terms of biological role, catalyzes a trans-dehydration via an enolate intermediate. The chain is 3-dehydroquinate dehydratase (aroQ) from Corynebacterium glutamicum (strain ATCC 13032 / DSM 20300 / JCM 1318 / BCRC 11384 / CCUG 27702 / LMG 3730 / NBRC 12168 / NCIMB 10025 / NRRL B-2784 / 534).